The chain runs to 241 residues: tRNA pseudouridine synthase A (241 aa).

Aspartate 51 acts as the Nucleophile in catalysis. Tyrosine 110 contributes to the substrate binding site.

The protein belongs to the tRNA pseudouridine synthase TruA family. As to quaternary structure, homodimer.

It catalyses the reaction uridine(38/39/40) in tRNA = pseudouridine(38/39/40) in tRNA. Functionally, formation of pseudouridine at positions 38, 39 and 40 in the anticodon stem and loop of transfer RNAs. This chain is tRNA pseudouridine synthase A, found in Campylobacter jejuni subsp. doylei (strain ATCC BAA-1458 / RM4099 / 269.97).